The primary structure comprises 343 residues: L-threonine 3-dehydrogenase (343 aa).

Cys-40 provides a ligand contact to Zn(2+). Active-site charge relay system residues include Thr-42 and His-45. Residues His-65, Glu-66, Cys-95, Cys-98, Cys-101, and Cys-109 each contribute to the Zn(2+) site. Residues Ile-177, Asp-197, Arg-202, 264–266 (LGI), and 288–289 (IY) contribute to the NAD(+) site.

This sequence belongs to the zinc-containing alcohol dehydrogenase family. Homotetramer. The cofactor is Zn(2+).

The protein resides in the cytoplasm. It carries out the reaction L-threonine + NAD(+) = (2S)-2-amino-3-oxobutanoate + NADH + H(+). Its pathway is amino-acid degradation; L-threonine degradation via oxydo-reductase pathway; glycine from L-threonine: step 1/2. Its function is as follows. Catalyzes the NAD(+)-dependent oxidation of L-threonine to 2-amino-3-ketobutyrate. This chain is L-threonine 3-dehydrogenase, found in Vibrio vulnificus (strain CMCP6).